Reading from the N-terminus, the 1079-residue chain is Lon protease homolog, mitochondrial (1079 aa).

The N-terminal 60 residues, 1-60 (MLRPRTYVRKLAWRCPRKSQLGLRLATSVSSHKSLPLPMNFDISHSQSAFRAYQDIIHRN), are a transit peptide targeting the mitochondrion. A compositionally biased stretch (basic and acidic residues) spans 61–116 (KSVGDDEPSQRSENENNPSESDKDSNQDPETPKKDKESENDKEPEKEKDIENDNKV). Disordered regions lie at residues 61–158 (KSVG…VDPV) and 262–285 (LTTP…ESFP). Positions 117-131 (SSESNENVTLASSNT) are enriched in polar residues. The span at 132–143 (GGAAPPNGNNNG) shows a compositional bias: low complexity. One can recognise a Lon N-terminal domain in the interval 165 to 391 (LLAIPMKDRP…RALELLKVEL (227 aa)). A compositionally biased stretch (basic and acidic residues) spans 262–281 (LTTPSSEKEAKSEEPSKEDA). ATP is bound at residue 543–550 (GPPGTGKT). The segment covering 756–765 (ALDSSKEKEG) has biased composition (basic and acidic residues). The segment at 756 to 832 (ALDSSKEKEG…SEEDQQPEPK (77 aa)) is disordered. A compositionally biased stretch (low complexity) spans 768–779 (ASSEEANVNSES). A compositionally biased stretch (polar residues) spans 780 to 802 (TKSNTSQAEPVAESSTDISTKSK). Basic and acidic residues predominate over residues 803 to 818 (VASEKIETKEKKETNK). A Lon proteolytic domain is found at 865–1053 (FPPPGVATGL…QEVFDKIFPN (189 aa)). Catalysis depends on residues Ser959 and Lys1002.

It belongs to the peptidase S16 family. In terms of assembly, homohexamer or homoheptamer. Organized in a ring with a central cavity.

The protein resides in the mitochondrion matrix. The enzyme catalyses Hydrolysis of proteins in presence of ATP.. Functionally, ATP-dependent serine protease that mediates the selective degradation of misfolded, unassembled or oxidatively damaged polypeptides as well as certain short-lived regulatory proteins in the mitochondrial matrix. May also have a chaperone function in the assembly of inner membrane protein complexes. Participates in the regulation of mitochondrial gene expression and in the maintenance of the integrity of the mitochondrial genome. Binds to mitochondrial DNA in a site-specific manner. In Debaryomyces hansenii (strain ATCC 36239 / CBS 767 / BCRC 21394 / JCM 1990 / NBRC 0083 / IGC 2968) (Yeast), this protein is Lon protease homolog, mitochondrial.